The following is a 510-amino-acid chain: Kynurenine 3-monooxygenase (510 aa).

The protein belongs to the aromatic-ring hydroxylase family. KMO subfamily. Requires FAD as cofactor.

Its subcellular location is the mitochondrion outer membrane. It carries out the reaction L-kynurenine + NADPH + O2 + H(+) = 3-hydroxy-L-kynurenine + NADP(+) + H2O. It participates in cofactor biosynthesis; NAD(+) biosynthesis; quinolinate from L-kynurenine: step 1/3. In terms of biological role, catalyzes the hydroxylation of L-kynurenine (L-Kyn) to form 3-hydroxy-L-kynurenine (L-3OHKyn). Required for synthesis of quinolinic acid. This Aspergillus oryzae (strain ATCC 42149 / RIB 40) (Yellow koji mold) protein is Kynurenine 3-monooxygenase (bna4).